A 1082-amino-acid polypeptide reads, in one-letter code: CRISPR-associated endonuclease Cas9 (1082 aa).

Aspartate 16 functions as the For RuvC-like nuclease domain in the catalytic mechanism. Residues aspartate 16, glutamate 504, and glutamate 508 each contribute to the Mg(2+) site. The HNH Cas9-type domain occupies 512 to 667 (SFKDRKEIEK…DEDGFKERNL (156 aa)). Histidine 588 serves as the catalytic Proton acceptor for HNH nuclease domain. Histidine 723 is a Mg(2+) binding site.

It belongs to the CRISPR-associated protein Cas9 family. Subtype II-C subfamily. As to quaternary structure, monomer. Binds crRNA and tracrRNA. Requires Mg(2+) as cofactor.

Functionally, CRISPR (clustered regularly interspaced short palindromic repeat) is an adaptive immune system that provides protection against mobile genetic elements (viruses, transposable elements and conjugative plasmids). CRISPR clusters contain spacers, sequences complementary to antecedent mobile elements, and target invading nucleic acids. CRISPR clusters are transcribed and processed into CRISPR RNA (crRNA). In type II CRISPR systems correct processing of pre-crRNA requires a trans-encoded small RNA (tracrRNA), endogenous ribonuclease 3 (rnc) and this protein. The tracrRNA serves as a guide for ribonuclease 3-aided processing of pre-crRNA. Subsequently Cas9/crRNA/tracrRNA endonucleolytically cleaves linear or circular dsDNA target complementary to the spacer; Cas9 is inactive in the absence of the 2 guide RNAs (gRNA). Cas9 recognizes the protospacer adjacent motif (PAM) in the CRISPR repeat sequences to help distinguish self versus nonself, as targets within the bacterial CRISPR locus do not have PAMs. PAM recognition is also required for catalytic activity. Cuts target DNA in Cas9:gRNAs mixing experiments with C.jejuni strain NCTC 11168 and P.multocoda strain Pm70. The chain is CRISPR-associated endonuclease Cas9 from Neisseria meningitidis serogroup A / serotype 4A (strain DSM 15465 / Z2491).